The primary structure comprises 837 residues: Probable aldehyde oxidase 4 (837 aa).

Residues 9-98 enclose the 2Fe-2S ferredoxin-type domain; that stretch reads ERVVFELNGE…FCSIITTEGL (90 aa). C50, C55, C58, and C80 together coordinate [2Fe-2S] cluster. The FAD-binding PCMH-type domain occupies 240 to 427; it reads ISGPREGWYC…LSIFIPHWAS (188 aa).

This sequence belongs to the xanthine dehydrogenase family. Aldehyde oxidases (AO) are homodimers and heterodimers of AO subunits. [2Fe-2S] cluster serves as cofactor. The cofactor is FAD. Requires Mo-molybdopterin as cofactor.

It catalyses the reaction an aldehyde + O2 + H2O = a carboxylate + H2O2 + H(+). In Oryza sativa subsp. japonica (Rice), this protein is Probable aldehyde oxidase 4.